Here is an 880-residue protein sequence, read N- to C-terminus: Calcium-transporting ATPase lmo0841 (880 aa).

Helical transmembrane passes span 47 to 67 (LWKL…VIAA), 68 to 88 (LVQL…VLIV), 243 to 263 (LGLG…GRVL), and 271 to 291 (MATA…AAIP). Residues valine 287, alanine 288, isoleucine 290, and glutamate 292 each coordinate Ca(2+). Aspartate 334 serves as the catalytic 4-aspartylphosphate intermediate. 5 helical membrane-spanning segments follow: residues 681-701 (IAYL…ALVL), 707-727 (FTAL…AIAL), 756-776 (AVIS…YIGM), 819-839 (YVIG…LPGA), and 854-874 (WSIA…IKVV). Residues asparagine 716 and aspartate 720 each contribute to the Ca(2+) site.

Belongs to the cation transport ATPase (P-type) (TC 3.A.3) family. Type IIA subfamily.

The protein resides in the cell membrane. It carries out the reaction Ca(2+)(in) + ATP + H2O = Ca(2+)(out) + ADP + phosphate + H(+). Phosphorylation is inhibited by EGTA and vanadate. ATPase activity is stimulated by Sr(2+). Inhibited by very high concentrations of cyclopiazonic acid (CPA). Its function is as follows. Catalyzes the hydrolysis of ATP coupled with the transport of calcium. The transport is electrogenic with a probable ATP:Ca(2+):H(+) stoichiometry of 1:1:1. May have an important role in survival of the bacterium when stressed by a combination of a high calcium concentration and alkaline pH. This is Calcium-transporting ATPase lmo0841 from Listeria monocytogenes serovar 1/2a (strain ATCC BAA-679 / EGD-e).